A 440-amino-acid chain; its full sequence is Protein CyaD (440 aa).

The Cytoplasmic segment spans residues 1 to 55 (MRRALRELAARHGRVLAASWRQRHRRPAGWFDPVETEFLPSALSLQERPISPTAR). A helical transmembrane segment spans residues 56-75 (WLARILMALAAGALVWSVVG). The Periplasmic segment spans residues 76 to 440 (KTEIVVHAAG…RHAGESLGER (365 aa)).

The protein belongs to the membrane fusion protein (MFP) (TC 8.A.1) family.

It is found in the cell inner membrane. CyaD is necessary for transport of calmodulin-sensitive adenylate cyclase-hemolysin (cyclolysin). The protein is Protein CyaD (cyaD) of Bordetella pertussis (strain ATCC 9797 / DSM 5571 / CCUG 30873 / LMG 14455 / NCTC 10739 / 18323).